Reading from the N-terminus, the 370-residue chain is Anhydro-N-acetylmuramic acid kinase (370 aa).

An ATP-binding site is contributed by 13–20 (GTSMDGID).

The protein belongs to the anhydro-N-acetylmuramic acid kinase family.

The catalysed reaction is 1,6-anhydro-N-acetyl-beta-muramate + ATP + H2O = N-acetyl-D-muramate 6-phosphate + ADP + H(+). It participates in amino-sugar metabolism; 1,6-anhydro-N-acetylmuramate degradation. The protein operates within cell wall biogenesis; peptidoglycan recycling. Its function is as follows. Catalyzes the specific phosphorylation of 1,6-anhydro-N-acetylmuramic acid (anhMurNAc) with the simultaneous cleavage of the 1,6-anhydro ring, generating MurNAc-6-P. Is required for the utilization of anhMurNAc either imported from the medium or derived from its own cell wall murein, and thus plays a role in cell wall recycling. This is Anhydro-N-acetylmuramic acid kinase from Rhizobium etli (strain ATCC 51251 / DSM 11541 / JCM 21823 / NBRC 15573 / CFN 42).